The following is a 1025-amino-acid chain: Multidrug resistance protein MdtC (1025 aa).

12 helical membrane-spanning segments follow: residues 15-35 (ILIS…LPVA), 333-353 (EVEQ…FLFL), 360-380 (LIPA…MYLC), 387-407 (LSLM…IVVL), 431-451 (VGFT…PLLL), 469-489 (VAIG…CGWL), 528-548 (LTGL…ISIP), 851-871 (AQVI…GVLY), 875-895 (VHPL…LLAL), 897-917 (IFDA…IGIV), 953-973 (PIMM…LSGG), and 984-1004 (ITIV…TPVV).

The protein belongs to the resistance-nodulation-cell division (RND) (TC 2.A.6) family. MdtC subfamily. Part of a tripartite efflux system composed of MdtA, MdtB and MdtC. MdtC forms a heteromultimer with MdtB.

The protein localises to the cell inner membrane. The sequence is that of Multidrug resistance protein MdtC from Klebsiella pneumoniae subsp. pneumoniae (strain ATCC 700721 / MGH 78578).